The primary structure comprises 56 residues: Bowman-Birk type proteinase inhibitor I-2B (56 aa).

Cystine bridges form between Cys10–Cys25, Cys15–Cys23, Cys32–Cys39, and Cys36–Cys51.

This sequence belongs to the Bowman-Birk serine protease inhibitor family.

The chain is Bowman-Birk type proteinase inhibitor I-2B from Triticum aestivum (Wheat).